The sequence spans 1605 residues: Sister chromatid cohesion protein PDS5 homolog A (1605 aa).

HEAT repeat units lie at residues 50–89, 96–136, 146–183, 184–221, 261–298, 302–339, 341–378, 380–416, 552–591, 644–681, 723–758, 821–860, 961–1000, and 1050–1088; these read KSIQPFLDAVIKPEILNHQDKDVKLLVASCVSEITRITAP, NIMK…YRSC, DLVKEVFTTFLDVARDDHPEIVFSSMQNIMIVLLEESE, DVQEHLLLILLSKLGRNRSDVRDAARRLAMKVIEHCAP, QALSGVAPYLTGELLADKLETRLKVVGLVGELFSLPGR, EEFDSIFLEFLKRLTDRVVEVRMAILDHIKDCLLSDPL, AEASQIISALCDRLLDYDENIRKQVVAVICDVSVSALT, IPVDTMKLVAERLRDKAILVKTYTMERLTELFRVYCL, ANIWKILTNLLDPNTSITQASRIRDDMLKILSEKHSLYDF, SLFDGAEEELISFLKDDDEMMKEGTLKILAKAGGTIRE, KSLSVLYKRLVDMLEDKRYQPAVLQCLGCIAQIAMP, AGVDDLLGILKNILSFGEVSEDLESSSVDKAHLRLAAAKA, LYPHHILPYLVHALAHHSCPDVEKCKDVKEYEMIYRQLYL, and HAICELGLSIINHLTQKEPDLQGEITPVSLPPTLYKPSE. Disordered regions lie at residues 1155-1182 and 1203-1262; these read LRAQGTKTRKGKKNKSVPAEDENGKNDV and ESSN…PKVQ. A compositionally biased stretch (basic and acidic residues) spans 1211 to 1225; sequence SPSERAEICQRDQKG. The Nuclear localization signal 1 signature appears at 1226-1233; the sequence is NKRNVGDA. Position 1274 is a phosphoserine (S1274). The segment covering 1279 to 1295 has biased composition (basic and acidic residues); it reads NVSLDSHDENSDQEKML. Disordered stretches follow at residues 1279–1307, 1324–1353, and 1423–1605; these read NVSLDSHDENSDQEKMLESISPRKRKKSL, ERSRSAGGGDSKLKSASGSMKKRKNVSGLA, and GKTA…RTAI. S1299 is subject to Phosphoserine. Composition is skewed to basic residues over residues 1425-1442 and 1464-1476; these read TAKKSRTSKGNSKKKRSS and KGKRTPKKNLKQL. The Nuclear localization signal 2 signature appears at 1426–1433; that stretch reads AKKSRTSK. 3 stretches are compositionally biased toward basic and acidic residues: residues 1477-1495, 1514-1527, and 1534-1574; these read HPKDTPKSLSLEHEKVESR, GEEKSESEGKSLKE, and VVNK…NEME. Residues S1524, S1562, and S1584 each carry the phosphoserine modification. Residues 1575 to 1585 show a composition bias toward acidic residues; the sequence is REAEENAETSD. A Phosphothreonine modification is found at T1588.

It belongs to the PDS5 family. Interacts with the cohesin complex. Interacts with DEK3.

Its subcellular location is the nucleus. Its function is as follows. Cohesin cofactor dispensable during the meiotic division but playing an important role in DNA repair by homologous recombination (HR) probably by helping SMC5/SMC6 complex. Regulator of sister chromatid cohesion in mitosis which may stabilize cohesin complex association with chromatin. May couple sister chromatid cohesion during mitosis to DNA replication. Cohesion ensures that chromosome partitioning is accurate in both meiotic and mitotic cells and plays an important role in DNA repair. The protein is Sister chromatid cohesion protein PDS5 homolog A of Arabidopsis thaliana (Mouse-ear cress).